A 261-amino-acid polypeptide reads, in one-letter code: Phosphoribosylaminoimidazole-succinocarboxamide synthase (261 aa).

This sequence belongs to the SAICAR synthetase family.

It carries out the reaction 5-amino-1-(5-phospho-D-ribosyl)imidazole-4-carboxylate + L-aspartate + ATP = (2S)-2-[5-amino-1-(5-phospho-beta-D-ribosyl)imidazole-4-carboxamido]succinate + ADP + phosphate + 2 H(+). It participates in purine metabolism; IMP biosynthesis via de novo pathway; 5-amino-1-(5-phospho-D-ribosyl)imidazole-4-carboxamide from 5-amino-1-(5-phospho-D-ribosyl)imidazole-4-carboxylate: step 1/2. The polypeptide is Phosphoribosylaminoimidazole-succinocarboxamide synthase (Novosphingobium aromaticivorans (strain ATCC 700278 / DSM 12444 / CCUG 56034 / CIP 105152 / NBRC 16084 / F199)).